Reading from the N-terminus, the 60-residue chain is Small ribosomal subunit protein eS31 (60 aa).

The Zn(2+) site is built by Cys32, Cys35, Cys50, and Cys53. Residues 32-53 (CPRCGAGVFMGEHKDRFSCGKC) form a C4-type zinc finger.

This sequence belongs to the eukaryotic ribosomal protein eS31 family. As to quaternary structure, part of the 30S ribosomal subunit. It depends on Zn(2+) as a cofactor.

The polypeptide is Small ribosomal subunit protein eS31 (Methanocorpusculum labreanum (strain ATCC 43576 / DSM 4855 / Z)).